A 180-amino-acid chain; its full sequence is Ribulose bisphosphate carboxylase small subunit, chloroplastic 1 (180 aa).

The N-terminal 56 residues, 1–56 (MASSVISSAAVATRTNVAQASMVAPFNGLKSAVSFPVSSKQNLDITSIASNGGRVQ), are a transit peptide targeting the chloroplast.

Belongs to the RuBisCO small chain family. In terms of assembly, heterohexadecamer of 8 large and 8 small subunits.

The protein localises to the plastid. It localises to the chloroplast. Functionally, ruBisCO catalyzes two reactions: the carboxylation of D-ribulose 1,5-bisphosphate, the primary event in carbon dioxide fixation, as well as the oxidative fragmentation of the pentose substrate. Both reactions occur simultaneously and in competition at the same active site. Although the small subunit is not catalytic it is essential for maximal activity. The chain is Ribulose bisphosphate carboxylase small subunit, chloroplastic 1 from Petunia hybrida (Petunia).